Reading from the N-terminus, the 145-residue chain is Cell division protein SepF (145 aa).

The protein belongs to the SepF family. In terms of assembly, homodimer. Interacts with FtsZ.

The protein resides in the cytoplasm. In terms of biological role, cell division protein that is part of the divisome complex and is recruited early to the Z-ring. Probably stimulates Z-ring formation, perhaps through the cross-linking of FtsZ protofilaments. Its function overlaps with FtsA. This Lactobacillus acidophilus (strain ATCC 700396 / NCK56 / N2 / NCFM) protein is Cell division protein SepF.